Here is an 814-residue protein sequence, read N- to C-terminus: DNA ligase (814 aa).

NAD(+) contacts are provided by residues 46 to 50 (DAEYD), 95 to 96 (SL), and E129. The active-site N6-AMP-lysine intermediate is the K131. The NAD(+) site is built by R152, E189, K305, and K329. C434, C437, C458, and C464 together coordinate Zn(2+). The interval 526–549 (SAQRRTEGEPAPKKPTKKKGEEED) is disordered. The BRCT domain occupies 735-814 (TSAAAFAGKT…DDWLAMLAEA (80 aa)).

The protein belongs to the NAD-dependent DNA ligase family. LigA subfamily. Mg(2+) serves as cofactor. The cofactor is Mn(2+).

It catalyses the reaction NAD(+) + (deoxyribonucleotide)n-3'-hydroxyl + 5'-phospho-(deoxyribonucleotide)m = (deoxyribonucleotide)n+m + AMP + beta-nicotinamide D-nucleotide.. Its function is as follows. DNA ligase that catalyzes the formation of phosphodiester linkages between 5'-phosphoryl and 3'-hydroxyl groups in double-stranded DNA using NAD as a coenzyme and as the energy source for the reaction. It is essential for DNA replication and repair of damaged DNA. The chain is DNA ligase from Methylorubrum extorquens (strain CM4 / NCIMB 13688) (Methylobacterium extorquens).